We begin with the raw amino-acid sequence, 115 residues long: Meromycolate extension acyl carrier protein (115 aa).

In terms of domain architecture, Carrier spans 3–81 (VTQEEIIAGI…DVVAYIQKLE (79 aa)). At S41 the chain carries O-(pantetheine 4'-phosphoryl)serine.

Belongs to the acyl carrier protein (ACP) family. In terms of processing, 4'-phosphopantetheine is transferred from CoA to a specific serine of apo-AcpM.

The protein localises to the cytoplasm. Acyl carrier protein involved in meromycolate extension. In Mycobacterium bovis (strain ATCC BAA-935 / AF2122/97), this protein is Meromycolate extension acyl carrier protein (acpM).